Reading from the N-terminus, the 273-residue chain is NH(3)-dependent NAD(+) synthetase (273 aa).

ATP is bound at residue 47 to 54 (GISGGQDS). Asp53 contacts Mg(2+). Residue Arg139 participates in deamido-NAD(+) binding. Thr159 contacts ATP. Glu164 serves as a coordination point for Mg(2+). Lys172 and Asp179 together coordinate deamido-NAD(+). Lys188 and Thr210 together coordinate ATP. 259–260 (HK) lines the deamido-NAD(+) pocket.

The protein belongs to the NAD synthetase family. Homodimer.

The enzyme catalyses deamido-NAD(+) + NH4(+) + ATP = AMP + diphosphate + NAD(+) + H(+). It participates in cofactor biosynthesis; NAD(+) biosynthesis; NAD(+) from deamido-NAD(+) (ammonia route): step 1/1. In terms of biological role, catalyzes the ATP-dependent amidation of deamido-NAD to form NAD. Uses ammonia as a nitrogen source. The chain is NH(3)-dependent NAD(+) synthetase from Staphylococcus aureus (strain N315).